Reading from the N-terminus, the 100-residue chain is uncharacterized protein (100 aa).

A disordered region spans residues 78–100; it reads NNGNLDFKGRADERRQPVSNLRM. Residues 84–93 show a composition bias toward basic and acidic residues; that stretch reads FKGRADERRQ.

This is an uncharacterized protein from Saccharomyces cerevisiae (strain ATCC 204508 / S288c) (Baker's yeast).